A 248-amino-acid chain; its full sequence is Cell division protein ZapD (248 aa).

This sequence belongs to the ZapD family. Interacts with FtsZ.

The protein localises to the cytoplasm. Functionally, cell division factor that enhances FtsZ-ring assembly. Directly interacts with FtsZ and promotes bundling of FtsZ protofilaments, with a reduction in FtsZ GTPase activity. This Aliivibrio fischeri (strain ATCC 700601 / ES114) (Vibrio fischeri) protein is Cell division protein ZapD.